The primary structure comprises 305 residues: 17-beta-hydroxysteroid dehydrogenase type 3 (305 aa).

44-73 contributes to the NADP(+) binding site; sequence GQWAVITGAGDGIGKAYSFELARHGLNVVL. Serine 181 provides a ligand contact to substrate. Tyrosine 194 acts as the Proton acceptor in catalysis.

Belongs to the short-chain dehydrogenases/reductases (SDR) family. 17-beta-HSD 3 subfamily. Expressed in the testes.

The protein localises to the endoplasmic reticulum. It catalyses the reaction a 17beta-hydroxy steroid + NADP(+) = a 17-oxo steroid + NADPH + H(+). It carries out the reaction testosterone + NADP(+) = androst-4-ene-3,17-dione + NADPH + H(+). The catalysed reaction is 17beta-estradiol + NADP(+) = estrone + NADPH + H(+). The enzyme catalyses 3beta-hydroxyandrost-5-en-17-one + NADPH + H(+) = androst-5-en-3beta,17beta-diol + NADP(+). It catalyses the reaction 17beta-hydroxy-5alpha-androstan-3-one + NADP(+) = 5alpha-androstan-3,17-dione + NADPH + H(+). It carries out the reaction androsterone + NADPH + H(+) = 5alpha-androstane-3alpha,17beta-diol + NADP(+). The catalysed reaction is 3beta-hydroxy-5alpha-androstan-17-one + NADPH + H(+) = 5alpha-androstane-3beta,17beta-diol + NADP(+). The enzyme catalyses androst-4-ene-3,11,17-trione + NADPH + H(+) = 17beta-hydroxyandrost-4-ene-3,11-dione + NADP(+). It catalyses the reaction 11beta-hydroxyandrost-4-ene-3,17-dione + NADPH + H(+) = 11beta,17beta-dihydroxyandrost-4-ene-3-one + NADP(+). Its pathway is hormone biosynthesis; testosterone biosynthesis. It functions in the pathway steroid metabolism. In terms of biological role, catalyzes the conversion of 17-oxosteroids to 17beta-hydroxysteroids. Favors the reduction of androstenedione to testosterone. Testosterone is the key androgen driving male development and function. Uses NADPH while the two other EDH17B enzymes use NADH. Androgens such as epiandrosterone, dehydroepiandrosterone, androsterone and androstanedione are accepted as substrates and reduced at C-17. Can reduce 11-ketoandrostenedione as well as 11beta-hydroxyandrostenedione at C-17 to the respective testosterone forms. Plays a role in the rate-limiting-step for the maximum level of testosterone production by the testis but does not affect basal testosterone production. In Mus musculus (Mouse), this protein is 17-beta-hydroxysteroid dehydrogenase type 3.